Here is a 433-residue protein sequence, read N- to C-terminus: Trigger factor (433 aa).

Positions 163-248 (GNFVVIDFVG…VKEAKVKELP (86 aa)) constitute a PPIase FKBP-type domain.

This sequence belongs to the FKBP-type PPIase family. Tig subfamily.

It is found in the cytoplasm. The enzyme catalyses [protein]-peptidylproline (omega=180) = [protein]-peptidylproline (omega=0). Involved in protein export. Acts as a chaperone by maintaining the newly synthesized protein in an open conformation. Functions as a peptidyl-prolyl cis-trans isomerase. The protein is Trigger factor of Geobacter metallireducens (strain ATCC 53774 / DSM 7210 / GS-15).